Consider the following 428-residue polypeptide: uncharacterized protein (428 aa).

A run of 10 helical transmembrane segments spans residues 26 to 46, 51 to 71, 90 to 110, 135 to 155, 177 to 197, 223 to 243, 278 to 298, 314 to 334, 359 to 379, and 407 to 427; these read VALT…DDVF, AGID…VSVL, AAPL…SALL, TPFL…TLVG, MAPA…WLLG, LLIK…AHPV, TLLF…TGVV, LLTV…IDNI, TFWW…AVAA, and VVTA…YFVF.

Belongs to the CitM (TC 2.A.11) transporter family.

It is found in the cell membrane. This is an uncharacterized protein from Mycobacterium tuberculosis (strain CDC 1551 / Oshkosh).